The primary structure comprises 319 residues: Histone-lysine N-methyltransferase set5 (319 aa).

Residues 4-141 (YETEIYKVVP…AGEEILTTYI (138 aa)) enclose the SET domain. S316 is modified (phosphoserine). Phosphothreonine is present on T318.

Belongs to the class V-like SAM-binding methyltransferase superfamily.

It is found in the nucleus. It localises to the chromosome. The protein resides in the cytoplasm. It catalyses the reaction L-lysyl-[histone] + S-adenosyl-L-methionine = N(6)-methyl-L-lysyl-[histone] + S-adenosyl-L-homocysteine + H(+). Functionally, histone methyltransferase that monomethylates 'Lys-5', 'Lys-8' and 'Lys-12' of histone H4 (H4K5me1, H4K8me1 and H4K12me1, respectively), thereby controlling gene expression and remodeling chromatin structures. Monomethylation of 'Lys-5' of histone H4 (H4K5me1) is required for subsequent acetylation and formation of N6-acetyl-N6-methyllysine (H4K5acme). The sequence is that of Histone-lysine N-methyltransferase set5 (set5) from Schizosaccharomyces pombe (strain 972 / ATCC 24843) (Fission yeast).